A 201-amino-acid polypeptide reads, in one-letter code: Large ribosomal subunit protein uL4 (201 aa).

The tract at residues Ala39–Arg67 is disordered.

It belongs to the universal ribosomal protein uL4 family. As to quaternary structure, part of the 50S ribosomal subunit.

In terms of biological role, one of the primary rRNA binding proteins, this protein initially binds near the 5'-end of the 23S rRNA. It is important during the early stages of 50S assembly. It makes multiple contacts with different domains of the 23S rRNA in the assembled 50S subunit and ribosome. Functionally, forms part of the polypeptide exit tunnel. In Marinomonas sp. (strain MWYL1), this protein is Large ribosomal subunit protein uL4.